The sequence spans 312 residues: Small ribosomal subunit protein uS2 (312 aa).

The interval 232–312 (RASGAAERDE…AAPEGEAAAE (81 aa)) is disordered. Over residues 245 to 284 (REGRDDRGDRRDDRRGPRRGDRRDDRRDRGGDRGGDRRGP) the composition is skewed to basic and acidic residues. The span at 291-312 (AAPVASAEPAAEAAPEGEAAAE) shows a compositional bias: low complexity.

It belongs to the universal ribosomal protein uS2 family.

In Myxococcus xanthus (strain DK1622), this protein is Small ribosomal subunit protein uS2.